The chain runs to 224 residues: Flagellar L-ring protein (224 aa).

The N-terminal stretch at 1–15 (MLRYLMVGSLLVLAG) is a signal peptide. Cys-16 carries the N-palmitoyl cysteine lipid modification. Cys-16 carries S-diacylglycerol cysteine lipidation.

Belongs to the FlgH family. The basal body constitutes a major portion of the flagellar organelle and consists of four rings (L,P,S, and M) mounted on a central rod.

Its subcellular location is the cell outer membrane. It localises to the bacterial flagellum basal body. Assembles around the rod to form the L-ring and probably protects the motor/basal body from shearing forces during rotation. The chain is Flagellar L-ring protein from Shewanella amazonensis (strain ATCC BAA-1098 / SB2B).